The following is a 951-amino-acid chain: Autophagy-related protein 9 (951 aa).

The tract at residues 1 to 165 is disordered; sequence MMTSNILSRF…APGPSSRADR (165 aa). Residues 1-239 are Cytoplasmic-facing; sequence MMTSNILSRF…NGIWSILLNR (239 aa). A compositionally biased stretch (polar residues) spans 16–33; the sequence is SPSVYETLRQQDAESNPS. Positions 35–54 are enriched in basic and acidic residues; that stretch reads VEERAGLEFEDDRRTQFSDR. Residues 79–94 are compositionally biased toward polar residues; it reads FLTQRSPQRTSGTATA. The span at 97-108 shows a compositional bias: basic residues; the sequence is GGRRRKHSRPRW. The chain crosses the membrane as a helical span at residues 240 to 260; sequence GLSLLTFAFVVGFSTFLTNCI. Residues 261-288 are Lumenal-facing; it reads DYRNFRGSRKMDDILIQQCTKKMSMSST. Residues 289–309 form a helical membrane-spanning segment; it reads FLLWLLTVFWIGKAFQYLMDI. Topologically, residues 310 to 455 are cytoplasmic; that stretch reads RRLKHMHDFY…KALSEGLRRR (146 aa). The stretch at 456–476 is an intramembrane region; sequence FIFAGIMNIFVAPFIVVYFLM. At 477 to 542 the chain is on the cytoplasmic side; it reads HYFFRYFNEY…QFPKDKTVQV (66 aa). The chain crosses the membrane as a helical span at residues 543 to 563; sequence AGFVAFVSGALASVLALVSII. At 564 to 577 the chain is on the lumenal side; that stretch reads DPELFLGFEITHDR. Residues 578–598 traverse the membrane as a helical segment; that stretch reads TVLFYLGVFGSVWAFARGLVP. The Cytoplasmic portion of the chain corresponds to 599–644; it reads EETNVFDPEFALLEVIDFTHYFPNHWKGRLHSDEVRKEFAVLYQMK. The stretch at 645–665 is an intramembrane region; it reads IVIFLEEILSMIFTPFILWFS. The Cytoplasmic portion of the chain corresponds to 666–951; that stretch reads LPKCSDRLID…DNRGRTTVGI (286 aa). The interval 848–897 is disordered; sequence SRPVRPITDPIEDDNESPSAEIRRGAVKKSPHTTTGSSGGAIGTSDSNLG.

Belongs to the ATG9 family. As to quaternary structure, homotrimer; forms a homotrimer with a central pore that forms a path between the two membrane leaflets. In terms of processing, phosphorylated by atg1. Atg1 phosphorylation is required for preautophagosome elongation.

It localises to the preautophagosomal structure membrane. It is found in the cytoplasmic vesicle membrane. The protein localises to the golgi apparatus membrane. Its subcellular location is the endoplasmic reticulum membrane. It catalyses the reaction a 1,2-diacyl-sn-glycero-3-phosphocholine(in) = a 1,2-diacyl-sn-glycero-3-phosphocholine(out). It carries out the reaction a 1,2-diacyl-sn-glycero-3-phospho-L-serine(in) = a 1,2-diacyl-sn-glycero-3-phospho-L-serine(out). The enzyme catalyses a 1,2-diacyl-sn-glycero-3-phosphoethanolamine(in) = a 1,2-diacyl-sn-glycero-3-phosphoethanolamine(out). The catalysed reaction is a 1,2-diacyl-sn-glycero-3-phospho-(1D-myo-inositol-3-phosphate)(in) = a 1,2-diacyl-sn-glycero-3-phospho-(1D-myo-inositol-3-phosphate)(out). Its function is as follows. Phospholipid scramblase involved in autophagy and cytoplasm to vacuole transport (Cvt) vesicle formation. Cycles between the preautophagosomal structure/phagophore assembly site (PAS) and the cytoplasmic vesicle pool and supplies membrane for the growing autophagosome. Lipid scramblase activity plays a key role in preautophagosomal structure/phagophore assembly by distributing the phospholipids that arrive through atg2 from the cytoplasmic to the luminal leaflet of the bilayer, thereby driving autophagosomal membrane expansion. Required for mitophagy. Also involved in endoplasmic reticulum-specific autophagic process and is essential for the survival of cells subjected to severe ER stress. Different machineries are required for anterograde trafficking to the PAS during either the Cvt pathway or bulk autophagy and for retrograde trafficking. The polypeptide is Autophagy-related protein 9 (atg9) (Aspergillus oryzae (strain ATCC 42149 / RIB 40) (Yellow koji mold)).